A 523-amino-acid chain; its full sequence is Peptide chain release factor 3 (523 aa).

Residues 10–277 form the tr-type G domain; sequence NKRRTFAIIS…QFVDLAPAPG (268 aa). GTP-binding positions include 19–26, 87–91, and 141–144; these read SHPDAGKT, DTPGH, and NKLD.

This sequence belongs to the TRAFAC class translation factor GTPase superfamily. Classic translation factor GTPase family. PrfC subfamily.

The protein localises to the cytoplasm. Functionally, increases the formation of ribosomal termination complexes and stimulates activities of RF-1 and RF-2. It binds guanine nucleotides and has strong preference for UGA stop codons. It may interact directly with the ribosome. The stimulation of RF-1 and RF-2 is significantly reduced by GTP and GDP, but not by GMP. This is Peptide chain release factor 3 from Lactobacillus delbrueckii subsp. bulgaricus (strain ATCC BAA-365 / Lb-18).